Consider the following 75-residue polypeptide: Large ribosomal subunit protein uL29 (75 aa).

Belongs to the universal ribosomal protein uL29 family.

This is Large ribosomal subunit protein uL29 from Nostoc punctiforme (strain ATCC 29133 / PCC 73102).